A 1257-amino-acid chain; its full sequence is Receptor tyrosine-protein kinase erbB-2 (1257 aa).

The signal sequence occupies residues 1–22 (MELAAWCRWGFLLALLPPGIAG). Topologically, residues 23-654 (TQVCTGTDMK…PAEQRASPVT (632 aa)) are extracellular. Cysteines 26 and 53 form a disulfide. Residues Asn-68 and Asn-188 are each glycosylated (N-linked (GlcNAc...) asparagine). 16 disulfide bridges follow: Cys-163-Cys-193, Cys-196-Cys-205, Cys-200-Cys-213, Cys-221-Cys-228, Cys-225-Cys-236, Cys-237-Cys-245, Cys-241-Cys-253, Cys-256-Cys-265, Cys-269-Cys-296, Cys-300-Cys-312, Cys-316-Cys-332, Cys-335-Cys-339, Cys-343-Cys-368, Cys-476-Cys-506, Cys-513-Cys-522, and Cys-517-Cys-530. N-linked (GlcNAc...) asparagine glycosylation occurs at Asn-260. A glycan (N-linked (GlcNAc...) asparagine) is linked at Asn-532. 8 disulfide bridges follow: Cys-533/Cys-542, Cys-546/Cys-562, Cys-565/Cys-578, Cys-569/Cys-586, Cys-589/Cys-598, Cys-602/Cys-625, Cys-628/Cys-636, and Cys-632/Cys-644. The N-linked (GlcNAc...) asparagine glycan is linked to Asn-573. The N-linked (GlcNAc...) asparagine glycan is linked to Asn-631. Residues 655 to 677 (FIIATVVGVLLFLILVVVVGILI) traverse the membrane as a helical segment. The interval 678–691 (KRRRQKIRKYTMRR) is required for interaction with KPNB1 and EEA1. Positions 678–691 (KRRRQKIRKYTMRR) match the Nuclear localization signal motif. The Cytoplasmic segment spans residues 678 to 1257 (KRRRQKIRKY…PEYLGLDVPV (580 aa)). The region spanning 722–989 (LRKVKVLGSG…RMARDPQRFV (268 aa)) is the Protein kinase domain. ATP-binding positions include 728-736 (LGSGAFGTV) and Lys-755. Asp-847 acts as the Proton acceptor in catalysis. Phosphotyrosine is present on Tyr-879. The interval 1029-1181 (QQGFFSPDPT…PKTLSPGKNG (153 aa)) is disordered. Residues Ser-1056, Ser-1080, Ser-1085, and Ser-1109 each carry the phosphoserine modification. At Tyr-1114 the chain carries Phosphotyrosine. Position 1141 is a phosphotyrosine; by autocatalysis (Tyr-1141). The segment covering 1149–1163 (PQPPLTPEGPLPPVR) has biased composition (pro residues). Thr-1168 is subject to Phosphothreonine. An interaction with PIK3C2B region spans residues 1197-1199 (EYL). Tyr-1198 bears the Phosphotyrosine mark. The interval 1200–1257 (VPREGTASPPHPSPAFSPAFDNLYYWDQNSSEQGPPPSNFEGTPTAENPEYLGLDVPV) is disordered. A Phosphotyrosine; by autocatalysis modification is found at Tyr-1250.

It belongs to the protein kinase superfamily. Tyr protein kinase family. EGF receptor subfamily. As to quaternary structure, homodimer. Heterodimer with EGFR, ERBB3 and ERBB4. Part of a complex with EGFR and either PIK3C2A or PIK3C2B. May interact with PIK3C2B when phosphorylated on Tyr-1198. Interacts with PRKCABP and PLXNB1. Interacts (when phosphorylated on Tyr-1250) with MEMO1. Interacts with MUC1. Interacts (when phosphorylated on Tyr-1141) with GRB7 (via SH2 domain). Interacts (when phosphorylated on Tyr-1250) with ERBIN Interacts with SRC, KPNB1, RANBP2, EEA1, CRM1, CLTC, PTK6, RPA194, MYOC and ACTB. Interacts with HSP90AA1 and HSP90AB1; the interaction suppresses ERBB2 kinase activity. Interacts with SORL1; this interaction regulates ERBB2 subcellular distribution by promoting its recycling after internalization from endosomes back to the plasma membrane, hence stimulates ERBB2-mediated signaling. Interacts with SH3BGRL. Interacts with ROR1. In terms of processing, autophosphorylated. Autophosphorylation occurs in trans, i.e. one subunit of the dimeric receptor phosphorylates tyrosine residues on the other subunit. Ligand-binding increases phosphorylation on tyrosine residues. Signaling via SEMA4C promotes phosphorylation at Tyr-1250. Dephosphorylated by PTPN12.

The protein localises to the cell membrane. Its subcellular location is the cell projection. The protein resides in the ruffle membrane. It localises to the early endosome. It is found in the cytoplasm. The protein localises to the perinuclear region. Its subcellular location is the nucleus. It carries out the reaction L-tyrosyl-[protein] + ATP = O-phospho-L-tyrosyl-[protein] + ADP + H(+). Its function is as follows. Protein tyrosine kinase that is part of several cell surface receptor complexes, but that apparently needs a coreceptor for ligand binding. Essential component of a neuregulin-receptor complex, although neuregulins do not interact with it alone. GP30 is a potential ligand for this receptor. Regulates outgrowth and stabilization of peripheral microtubules (MTs). Upon ERBB2 activation, the MEMO1-RHOA-DIAPH1 signaling pathway elicits the phosphorylation and thus the inhibition of GSK3B at cell membrane. This prevents the phosphorylation of APC and CLASP2, allowing its association with the cell membrane. In turn, membrane-bound APC allows the localization of MACF1 to the cell membrane, which is required for microtubule capture and stabilization. Interacts (preferentially with the tyrosine phosphorylated form) with CPNE3; this interaction occurs at the cell membrane and is increased in a growth factor heregulin-dependent manner. In terms of biological role, in the nucleus is involved in transcriptional regulation. Associates with the 5'-TCAAATTC-3' sequence in the PTGS2/COX-2 promoter and activates its transcription. Implicated in transcriptional activation of CDKN1A; the function involves STAT3 and SRC. Involved in the transcription of rRNA genes by RNA Pol I and enhances protein synthesis and cell growth. This is Receptor tyrosine-protein kinase erbB-2 (Erbb2) from Rattus norvegicus (Rat).